Consider the following 316-residue polypeptide: Beta-ketoacyl-[acyl-carrier-protein] synthase III (316 aa).

Residues Cys-112 and His-243 contribute to the active site. Residues 244–248 form an ACP-binding region; it reads QANLR. The active site involves Asn-273.

Belongs to the thiolase-like superfamily. FabH family. Homodimer.

It is found in the cytoplasm. The enzyme catalyses malonyl-[ACP] + acetyl-CoA + H(+) = 3-oxobutanoyl-[ACP] + CO2 + CoA. The protein operates within lipid metabolism; fatty acid biosynthesis. Catalyzes the condensation reaction of fatty acid synthesis by the addition to an acyl acceptor of two carbons from malonyl-ACP. Catalyzes the first condensation reaction which initiates fatty acid synthesis and may therefore play a role in governing the total rate of fatty acid production. Possesses both acetoacetyl-ACP synthase and acetyl transacylase activities. Its substrate specificity determines the biosynthesis of branched-chain and/or straight-chain of fatty acids. The chain is Beta-ketoacyl-[acyl-carrier-protein] synthase III from Actinobacillus succinogenes (strain ATCC 55618 / DSM 22257 / CCUG 43843 / 130Z).